Consider the following 271-residue polypeptide: Pyrroline-5-carboxylate reductase (271 aa).

This sequence belongs to the pyrroline-5-carboxylate reductase family.

The protein localises to the cytoplasm. It carries out the reaction L-proline + NADP(+) = (S)-1-pyrroline-5-carboxylate + NADPH + 2 H(+). The enzyme catalyses L-proline + NAD(+) = (S)-1-pyrroline-5-carboxylate + NADH + 2 H(+). The protein operates within amino-acid biosynthesis; L-proline biosynthesis; L-proline from L-glutamate 5-semialdehyde: step 1/1. Catalyzes the reduction of 1-pyrroline-5-carboxylate (PCA) to L-proline. This is Pyrroline-5-carboxylate reductase from Staphylococcus haemolyticus (strain JCSC1435).